The following is a 327-amino-acid chain: Ribonucleoside-diphosphate reductase small chain (327 aa).

Positions 70, 101, and 104 each coordinate Fe cation. Tyr-108 is an active-site residue. 3 residues coordinate Fe cation: Glu-164, Glu-198, and His-201.

This sequence belongs to the ribonucleoside diphosphate reductase small chain family. As to quaternary structure, heterotetramer composed of a homodimer of the large subunit (R1) and a homodimer of the small subunit (R2). Larger multisubunit protein complex are also active, composed of (R1)n(R2)n. It depends on Fe cation as a cofactor.

It catalyses the reaction a 2'-deoxyribonucleoside 5'-diphosphate + [thioredoxin]-disulfide + H2O = a ribonucleoside 5'-diphosphate + [thioredoxin]-dithiol. Its function is as follows. Ribonucleoside-diphosphate reductase holoenzyme provides the precursors necessary for viral DNA synthesis. Allows virus growth in non-dividing cells. Catalyzes the biosynthesis of deoxyribonucleotides from the corresponding ribonucleotides. This chain is Ribonucleoside-diphosphate reductase small chain, found in Ornithodoros (relapsing fever ticks).